Reading from the N-terminus, the 654-residue chain is Fructose-1,6-bisphosphatase class 3 (654 aa).

The protein belongs to the FBPase class 3 family. It depends on Mn(2+) as a cofactor.

The catalysed reaction is beta-D-fructose 1,6-bisphosphate + H2O = beta-D-fructose 6-phosphate + phosphate. It functions in the pathway carbohydrate biosynthesis; gluconeogenesis. The polypeptide is Fructose-1,6-bisphosphatase class 3 (Staphylococcus haemolyticus (strain JCSC1435)).